The chain runs to 320 residues: UDP-N-acetylenolpyruvoylglucosamine reductase (320 aa).

Positions 34-200 (RAGGLAEVFF…TSAVFEGFAE (167 aa)) constitute an FAD-binding PCMH-type domain. Residue arginine 180 is part of the active site. The active-site Proton donor is serine 229. Glutamate 299 is a catalytic residue.

Belongs to the MurB family. Requires FAD as cofactor.

The protein localises to the cytoplasm. The enzyme catalyses UDP-N-acetyl-alpha-D-muramate + NADP(+) = UDP-N-acetyl-3-O-(1-carboxyvinyl)-alpha-D-glucosamine + NADPH + H(+). It participates in cell wall biogenesis; peptidoglycan biosynthesis. Its function is as follows. Cell wall formation. In Mesorhizobium japonicum (strain LMG 29417 / CECT 9101 / MAFF 303099) (Mesorhizobium loti (strain MAFF 303099)), this protein is UDP-N-acetylenolpyruvoylglucosamine reductase.